An 87-amino-acid polypeptide reads, in one-letter code: U15-lycotoxin-Ls1f (87 aa).

Residues 1 to 20 (MNSKIFAVLLLLAFLSCVLS) form the signal peptide. In terms of domain architecture, WAP spans 21–66 (DQYCPKSSITACKKMNIRNDCCKDDDCTGGSWCCATPCGNFCKYPT). Cystine bridges form between Cys-24–Cys-54, Cys-32–Cys-58, Cys-41–Cys-53, Cys-42–Cys-80, and Cys-47–Cys-62.

Belongs to the venom protein 11 family. 01 (wap-1) subfamily. Post-translationally, contains 5 disulfide bonds. In terms of tissue distribution, expressed by the venom gland.

It is found in the secreted. Functionally, has antibacterial activity. This Lycosa singoriensis (Wolf spider) protein is U15-lycotoxin-Ls1f.